We begin with the raw amino-acid sequence, 272 residues long: Cell division protein FtsQ (272 aa).

Residues 1–43 (MEYNPPNTRERIAARRQRLRQPSSEPAIPGWRRRFIDGLQSGR) lie on the Cytoplasmic side of the membrane. The helical transmembrane segment at 44–64 (IVSGAVFVVSCLALFYVLFSS) threads the bilayer. The Extracellular portion of the chain corresponds to 65–272 (QFRVQTVEVV…FYQNRTDGRS (208 aa)). Residues 66 to 133 (FRVQTVEVVG…DRARIVIVER (68 aa)) enclose the POTRA domain.

The protein belongs to the FtsQ/DivIB family. FtsQ subfamily.

It is found in the cell membrane. Essential cell division protein. This Chloroflexus aggregans (strain MD-66 / DSM 9485) protein is Cell division protein FtsQ.